We begin with the raw amino-acid sequence, 409 residues long: 1-deoxy-D-xylulose 5-phosphate reductoisomerase (409 aa).

NADPH is bound by residues Thr5, Gly6, Ser7, Ile8, Gly31, Asn33, and Asn122. Lys123 serves as a coordination point for 1-deoxy-D-xylulose 5-phosphate. Glu124 is a binding site for NADPH. Residue Asp148 coordinates Mn(2+). 1-deoxy-D-xylulose 5-phosphate contacts are provided by Ser149, Glu150, Ser186, and His209. Glu150 serves as a coordination point for Mn(2+). An NADPH-binding site is contributed by Gly215. Ser222, Asn227, Lys228, and Glu231 together coordinate 1-deoxy-D-xylulose 5-phosphate. Residue Glu231 participates in Mn(2+) binding.

It belongs to the DXR family. Requires Mg(2+) as cofactor. The cofactor is Mn(2+).

It carries out the reaction 2-C-methyl-D-erythritol 4-phosphate + NADP(+) = 1-deoxy-D-xylulose 5-phosphate + NADPH + H(+). It participates in isoprenoid biosynthesis; isopentenyl diphosphate biosynthesis via DXP pathway; isopentenyl diphosphate from 1-deoxy-D-xylulose 5-phosphate: step 1/6. Functionally, catalyzes the NADPH-dependent rearrangement and reduction of 1-deoxy-D-xylulose-5-phosphate (DXP) to 2-C-methyl-D-erythritol 4-phosphate (MEP). The sequence is that of 1-deoxy-D-xylulose 5-phosphate reductoisomerase from Parasynechococcus marenigrum (strain WH8102).